A 480-amino-acid chain; its full sequence is Sialyltransferase-like protein 5 (480 aa).

Topologically, residues 1–17 (MARAPPPLSSLPPPPRR) are cytoplasmic. The signal-anchor for type II membrane protein transmembrane segment at 18–38 (PTVVLLLGLALAFCLAVLSIQ) threads the bilayer. Over 39 to 480 (SSFFTAPRLA…VCVRHERSSS (442 aa)) the chain is Lumenal. 4 N-linked (GlcNAc...) asparagine glycosylation sites follow: asparagine 98, asparagine 130, asparagine 165, and asparagine 321.

The protein belongs to the glycosyltransferase 29 family.

The protein resides in the golgi apparatus membrane. In terms of biological role, may possess sialyltransferase-like activity in vitro. The sequence is that of Sialyltransferase-like protein 5 from Oryza sativa subsp. japonica (Rice).